We begin with the raw amino-acid sequence, 576 residues long: A-type ATP synthase subunit A (576 aa).

228–235 (GGFGTGKT) is a binding site for ATP.

The protein belongs to the ATPase alpha/beta chains family. As to quaternary structure, has multiple subunits with at least A(3), B(3), C, D, E, F, H, I and proteolipid K(x).

The protein resides in the cell membrane. The enzyme catalyses ATP + H2O + 4 H(+)(in) = ADP + phosphate + 5 H(+)(out). In terms of biological role, component of the A-type ATP synthase that produces ATP from ADP in the presence of a proton gradient across the membrane. The A chain is the catalytic subunit. The polypeptide is A-type ATP synthase subunit A (Methanothrix thermoacetophila (strain DSM 6194 / JCM 14653 / NBRC 101360 / PT) (Methanosaeta thermophila)).